The following is a 243-amino-acid chain: Exosome complex component Rrp41 (243 aa).

This sequence belongs to the RNase PH family. Rrp41 subfamily. Component of the archaeal exosome complex. Forms a hexameric ring-like arrangement composed of 3 Rrp41-Rrp42 heterodimers. The hexameric ring associates with a trimer of Rrp4 and/or Csl4 subunits.

It localises to the cytoplasm. In terms of biological role, catalytic component of the exosome, which is a complex involved in RNA degradation. Has 3'-&gt;5' exoribonuclease activity. Can also synthesize heteromeric RNA-tails. This Sulfolobus acidocaldarius (strain ATCC 33909 / DSM 639 / JCM 8929 / NBRC 15157 / NCIMB 11770) protein is Exosome complex component Rrp41.